An 871-amino-acid polypeptide reads, in one-letter code: Metabotropic glutamate receptor 6 (871 aa).

Positions 1-23 are cleaved as a signal peptide; sequence MGRLPVLLLWLAWWLSQAGIACG. The Extracellular portion of the chain corresponds to 24–579; that stretch reads AGSVRLAGGL…VVRLTWSSPW (556 aa). C51 and C93 are oxidised to a cystine. L-glutamate contacts are provided by residues S148, 169–171, and Y219; that span reads AST. 7 disulfides stabilise this stretch: C238–C530, C361–C377, C417–C424, C512–C531, C516–C534, C537–C549, and C552–C565. N290 is a glycosylation site (N-linked (GlcNAc...) asparagine). Residue D301 participates in L-glutamate binding. K394 serves as a coordination point for L-glutamate. 2 N-linked (GlcNAc...) asparagine glycosylation sites follow: N445 and N473. N561 carries N-linked (GlcNAc...) asparagine glycosylation. A helical transmembrane segment spans residues 580-602; the sequence is AALPLLLAVLGIMATTTIMATFM. Topologically, residues 603–616 are cytoplasmic; that stretch reads RHNDTPIVRASGRE. A helical transmembrane segment spans residues 617–637; the sequence is LSYVLLTGIFLIYAITFLMVA. At 638–648 the chain is on the extracellular side; sequence EPCAAICAARR. The helical transmembrane segment at 649–667 threads the bilayer; it reads LLLGLGTTLSYSALLTKTN. Residues 668 to 691 are Cytoplasmic-facing; the sequence is RIYRIFEQGKRSVTPPPFISPTSQ. Residues 692–712 traverse the membrane as a helical segment; sequence LVITFGLTSLQVVGVIAWLGA. Residues 713–742 lie on the Extracellular side of the membrane; sequence QPPHSVIDYEEQRTVDPEQARGVLKCDMSD. Residues 743 to 764 traverse the membrane as a helical segment; the sequence is LSLIGCLGYSLLLMVTCTVYAI. Topologically, residues 765–777 are cytoplasmic; the sequence is KARGVPETFNEAK. Residues 778 to 800 form a helical membrane-spanning segment; that stretch reads PIGFTMYTTCIIWLAFVPIFFGT. The Extracellular segment spans residues 801–813; it reads AQSAEKIYIQTTT. A helical transmembrane segment spans residues 814-839; sequence LTVSLSLSASVSLGMLYVPKTYVILF. Residues 840–871 lie on the Cytoplasmic side of the membrane; it reads HPEQNVQKRKRSLKKTSTMAAPPQNENAEDAK. The tract at residues 850–871 is disordered; sequence RSLKKTSTMAAPPQNENAEDAK.

This sequence belongs to the G-protein coupled receptor 3 family. As to quaternary structure, homodimer. Interacts with GPR179. Interacts with photoreceptor synaptic protein LRIT1 (via its N-terminal extracellular domain). As to expression, restricted expression in the inner nuclear layer of the retina.

Its subcellular location is the cell membrane. It localises to the endoplasmic reticulum membrane. The protein resides in the golgi apparatus membrane. The protein localises to the cell projection. It is found in the dendrite. G-protein coupled receptor for glutamate. Ligand binding causes a conformation change that triggers signaling via guanine nucleotide-binding proteins (G proteins) and modulates the activity of down-stream effectors, such as adenylate cyclase. Signaling inhibits adenylate cyclase activity. Signaling stimulates TRPM1 channel activity and Ca(2+) uptake. Required for normal vision. The polypeptide is Metabotropic glutamate receptor 6 (Grm6) (Rattus norvegicus (Rat)).